Here is a 127-residue protein sequence, read N- to C-terminus: Protein ApaG (127 aa).

In terms of domain architecture, ApaG spans 3–127 (NNPSSKIEVA…FVLSVPRTLH (125 aa)).

The protein is Protein ApaG of Xylella fastidiosa (strain M23).